The sequence spans 281 residues: Ribosomal RNA small subunit methyltransferase A (281 aa).

Residues Asn-24, Leu-26, Gly-51, Glu-72, Asp-96, and Asn-123 each coordinate S-adenosyl-L-methionine.

It belongs to the class I-like SAM-binding methyltransferase superfamily. rRNA adenine N(6)-methyltransferase family. RsmA subfamily.

The protein resides in the cytoplasm. It carries out the reaction adenosine(1518)/adenosine(1519) in 16S rRNA + 4 S-adenosyl-L-methionine = N(6)-dimethyladenosine(1518)/N(6)-dimethyladenosine(1519) in 16S rRNA + 4 S-adenosyl-L-homocysteine + 4 H(+). In terms of biological role, specifically dimethylates two adjacent adenosines (A1518 and A1519) in the loop of a conserved hairpin near the 3'-end of 16S rRNA in the 30S particle. May play a critical role in biogenesis of 30S subunits. The chain is Ribosomal RNA small subunit methyltransferase A from Ureaplasma urealyticum serovar 10 (strain ATCC 33699 / Western).